Reading from the N-terminus, the 423-residue chain is Probable M18 family aminopeptidase 2 (423 aa).

Histidine 84, histidine 157, and histidine 397 together coordinate Zn(2+).

It belongs to the peptidase M18 family. Zn(2+) is required as a cofactor.

The protein is Probable M18 family aminopeptidase 2 (apeB) of Borreliella burgdorferi (strain ATCC 35210 / DSM 4680 / CIP 102532 / B31) (Borrelia burgdorferi).